We begin with the raw amino-acid sequence, 129 residues long: Small ribosomal subunit protein uS11 (129 aa).

This sequence belongs to the universal ribosomal protein uS11 family. As to quaternary structure, part of the 30S ribosomal subunit. Interacts with proteins S7 and S18. Binds to IF-3.

Its function is as follows. Located on the platform of the 30S subunit, it bridges several disparate RNA helices of the 16S rRNA. Forms part of the Shine-Dalgarno cleft in the 70S ribosome. The protein is Small ribosomal subunit protein uS11 of Ectopseudomonas mendocina (strain ymp) (Pseudomonas mendocina).